Reading from the N-terminus, the 391-residue chain is Probable protein phosphatase 2C 32 (391 aa).

Residues 1–53 (MSCTVAIPSSPVFSPSRRPLSCKAASASASPESVSVAASSPAQAAPPAGSPLR) are disordered. Residues 8–51 (PSSPVFSPSRRPLSCKAASASASPESVSVAASSPAQAAPPAGSP) are compositionally biased toward low complexity. The helical transmembrane segment at 95 to 115 (LVVPVCGGAAAAAAAAAVAAV) threads the bilayer. Positions 129–386 (EFAVYCRRGK…DDISIVIIQL (258 aa)) constitute a PPM-type phosphatase domain. Mn(2+) is bound by residues D168, G169, D332, and D377.

This sequence belongs to the PP2C family. The cofactor is Mg(2+). It depends on Mn(2+) as a cofactor.

The protein resides in the membrane. The enzyme catalyses O-phospho-L-seryl-[protein] + H2O = L-seryl-[protein] + phosphate. It carries out the reaction O-phospho-L-threonyl-[protein] + H2O = L-threonyl-[protein] + phosphate. The polypeptide is Probable protein phosphatase 2C 32 (Oryza sativa subsp. japonica (Rice)).